The following is a 275-amino-acid chain: NAD kinase (275 aa).

Catalysis depends on aspartate 68, which acts as the Proton acceptor. NAD(+) contacts are provided by residues 68-69, arginine 73, 136-137, lysine 147, arginine 164, aspartate 166, 177-182, alanine 201, and glutamine 236; these read DG, NE, and TAYAMS.

The protein belongs to the NAD kinase family. It depends on a divalent metal cation as a cofactor.

Its subcellular location is the cytoplasm. It carries out the reaction NAD(+) + ATP = ADP + NADP(+) + H(+). Involved in the regulation of the intracellular balance of NAD and NADP, and is a key enzyme in the biosynthesis of NADP. Catalyzes specifically the phosphorylation on 2'-hydroxyl of the adenosine moiety of NAD to yield NADP. This is NAD kinase from Methanosarcina acetivorans (strain ATCC 35395 / DSM 2834 / JCM 12185 / C2A).